The chain runs to 494 residues: Catalase (494 aa).

Residues H65 and N138 contribute to the active site. Y348 is a binding site for heme.

Belongs to the catalase family. In terms of assembly, homotetramer. The cofactor is heme.

The protein resides in the cytoplasm. It is found in the cytosol. It localises to the peroxisome matrix. It catalyses the reaction 2 H2O2 = O2 + 2 H2O. Catalyzes the degradation of hydrogen peroxide (H(2)O(2)) generated by peroxisomal oxidases to water and oxygen, thereby protecting cells from the toxic effects of hydrogen peroxide. The polypeptide is Catalase (Pisum sativum (Garden pea)).